The sequence spans 287 residues: Protease HtpX (287 aa).

2 consecutive transmembrane segments (helical) span residues 4–24 and 36–56; these read IMLF…VLNI and LSGL…ISLM. Residue histidine 143 participates in Zn(2+) binding. Glutamate 144 is a catalytic residue. Histidine 147 contacts Zn(2+). The next 2 helical transmembrane spans lie at 158–178 and 192–212; these read LMQG…ANIV and MVYF…ASFI. A Zn(2+)-binding site is contributed by glutamate 221.

It belongs to the peptidase M48B family. Requires Zn(2+) as cofactor.

Its subcellular location is the cell inner membrane. This chain is Protease HtpX, found in Vibrio parahaemolyticus serotype O3:K6 (strain RIMD 2210633).